Reading from the N-terminus, the 394-residue chain is Argininosuccinate synthase (394 aa).

ATP contacts are provided by residues 7–15 and alanine 34; that span reads AYSGGLDTS. Tyrosine 85 and serine 90 together coordinate L-citrulline. Residue glycine 115 participates in ATP binding. L-aspartate contacts are provided by threonine 117, asparagine 121, and aspartate 122. Position 121 (asparagine 121) interacts with L-citrulline. Residues arginine 125, serine 176, serine 185, glutamate 261, and tyrosine 273 each contribute to the L-citrulline site.

Belongs to the argininosuccinate synthase family. Type 1 subfamily. As to quaternary structure, homotetramer.

The protein localises to the cytoplasm. The enzyme catalyses L-citrulline + L-aspartate + ATP = 2-(N(omega)-L-arginino)succinate + AMP + diphosphate + H(+). It functions in the pathway amino-acid biosynthesis; L-arginine biosynthesis; L-arginine from L-ornithine and carbamoyl phosphate: step 2/3. This is Argininosuccinate synthase from Ehrlichia ruminantium (strain Welgevonden).